A 212-amino-acid chain; its full sequence is HTH-type transcriptional repressor KstR (212 aa).

Positions 1–11 (MTTSSRSRSST) are enriched in low complexity. Residues 1–28 (MTTSSRSRSSTVAAATLGEDDLSSNAQK) form a disordered region. Residues 28–88 (KERRKRILDA…SALAREFERI (61 aa)) enclose the HTH tetR-type domain. The segment at residues 51 to 70 (QMRAVAERADVAVGTLYRYF) is a DNA-binding region (H-T-H motif).

As to quaternary structure, homodimer.

Functionally, controls the expression of genes used for utilizing diverse lipids as energy sources. The protein is HTH-type transcriptional repressor KstR (kstR) of Rhodococcus jostii (strain RHA1).